Here is a 132-residue protein sequence, read N- to C-terminus: Ribosome-binding factor A (132 aa).

This sequence belongs to the RbfA family. As to quaternary structure, monomer. Binds 30S ribosomal subunits, but not 50S ribosomal subunits or 70S ribosomes.

It is found in the cytoplasm. Its function is as follows. One of several proteins that assist in the late maturation steps of the functional core of the 30S ribosomal subunit. Associates with free 30S ribosomal subunits (but not with 30S subunits that are part of 70S ribosomes or polysomes). Required for efficient processing of 16S rRNA. May interact with the 5'-terminal helix region of 16S rRNA. The chain is Ribosome-binding factor A from Burkholderia multivorans (strain ATCC 17616 / 249).